The primary structure comprises 281 residues: NADPH-dependent 7-cyano-7-deazaguanine reductase (281 aa).

81 to 83 (IES) serves as a coordination point for substrate. An NADPH-binding site is contributed by 83-84 (SK). Catalysis depends on cysteine 188, which acts as the Thioimide intermediate. Aspartate 195 (proton donor) is an active-site residue. 227–228 (HE) is a substrate binding site. Position 256 to 257 (256 to 257 (RG)) interacts with NADPH.

Belongs to the GTP cyclohydrolase I family. QueF type 2 subfamily. Homodimer.

The protein localises to the cytoplasm. The catalysed reaction is 7-aminomethyl-7-carbaguanine + 2 NADP(+) = 7-cyano-7-deazaguanine + 2 NADPH + 3 H(+). It participates in tRNA modification; tRNA-queuosine biosynthesis. Catalyzes the NADPH-dependent reduction of 7-cyano-7-deazaguanine (preQ0) to 7-aminomethyl-7-deazaguanine (preQ1). The sequence is that of NADPH-dependent 7-cyano-7-deazaguanine reductase from Paracidovorax citrulli (strain AAC00-1) (Acidovorax citrulli).